We begin with the raw amino-acid sequence, 214 residues long: uncharacterized protein (214 aa).

Residues 10–30 (LLLAGIGGFMVGGLASWVVSS) traverse the membrane as a helical segment. The span at 147–157 (SSQANSQSTQP) shows a compositional bias: polar residues. The disordered stretch occupies residues 147–166 (SSQANSQSTQPRDPIPTENF).

Its subcellular location is the membrane. This is an uncharacterized protein from Schizosaccharomyces pombe (strain 972 / ATCC 24843) (Fission yeast).